Reading from the N-terminus, the 417-residue chain is Gamma-glutamyl phosphate reductase (417 aa).

This sequence belongs to the gamma-glutamyl phosphate reductase family.

The protein resides in the cytoplasm. It carries out the reaction L-glutamate 5-semialdehyde + phosphate + NADP(+) = L-glutamyl 5-phosphate + NADPH + H(+). It functions in the pathway amino-acid biosynthesis; L-proline biosynthesis; L-glutamate 5-semialdehyde from L-glutamate: step 2/2. In terms of biological role, catalyzes the NADPH-dependent reduction of L-glutamate 5-phosphate into L-glutamate 5-semialdehyde and phosphate. The product spontaneously undergoes cyclization to form 1-pyrroline-5-carboxylate. The sequence is that of Gamma-glutamyl phosphate reductase from Shigella flexneri serotype 5b (strain 8401).